Consider the following 156-residue polypeptide: MSSNKINKKSIARIAAVQAIYQNILQNNDDMDDIMQNVLSFYQNNNSITDLPENLKISLSISHFKMLVKSVFENINKLDEIIDNHLTNDKDPAHMPILLRALLRVSICELLFCPTTPAKVVINEYTDIANDMLNEHEIGFVNSVLDKIAKEHTRLI.

The protein belongs to the NusB family.

Functionally, involved in transcription antitermination. Required for transcription of ribosomal RNA (rRNA) genes. Binds specifically to the boxA antiterminator sequence of the ribosomal RNA (rrn) operons. This chain is Transcription antitermination protein NusB, found in Rickettsia massiliae (strain Mtu5).